Here is a 103-residue protein sequence, read N- to C-terminus: Large ribosomal subunit protein uL24 (103 aa).

The protein belongs to the universal ribosomal protein uL24 family. In terms of assembly, part of the 50S ribosomal subunit.

In terms of biological role, one of two assembly initiator proteins, it binds directly to the 5'-end of the 23S rRNA, where it nucleates assembly of the 50S subunit. Its function is as follows. One of the proteins that surrounds the polypeptide exit tunnel on the outside of the subunit. In Actinobacillus pleuropneumoniae serotype 3 (strain JL03), this protein is Large ribosomal subunit protein uL24.